The following is a 379-amino-acid chain: PqqA peptide cyclase (379 aa).

The Radical SAM core domain maps to 8–220 (LPAPIGLLAE…IRVVEEARER (213 aa)). [4Fe-4S] cluster is bound by residues Cys-22, Cys-26, and Cys-29.

The protein belongs to the radical SAM superfamily. PqqE family. Interacts with PqqD. The interaction is necessary for activity of PqqE. It depends on [4Fe-4S] cluster as a cofactor.

It carries out the reaction [PQQ precursor protein] + S-adenosyl-L-methionine = E-Y cross-linked-[PQQ precursor protein] + 5'-deoxyadenosine + L-methionine + H(+). Its pathway is cofactor biosynthesis; pyrroloquinoline quinone biosynthesis. Its function is as follows. Catalyzes the cross-linking of a glutamate residue and a tyrosine residue in the PqqA protein as part of the biosynthesis of pyrroloquinoline quinone (PQQ). In Methylobacterium nodulans (strain LMG 21967 / CNCM I-2342 / ORS 2060), this protein is PqqA peptide cyclase.